A 259-amino-acid chain; its full sequence is Polycomb group RING finger protein 1 (259 aa).

At Ala-2 the chain carries N-acetylalanine. Ser-3 bears the Phosphoserine mark. Lys-24 is covalently cross-linked (Glycyl lysine isopeptide (Lys-Gly) (interchain with G-Cter in SUMO2)). Residues 47-86 (CCLCAGYFVDATTITECLHTFCKSCIVKYLQTSKYCPMCN) form an RING-type zinc finger. The required for repressor activity stretch occupies residues 86 to 247 (NIKIHETQPL…LSRWFGKPSP (162 aa)). A Glycyl lysine isopeptide (Lys-Gly) (interchain with G-Cter in SUMO2) cross-link involves residue Lys-88. The tract at residues 150 to 255 (LPFSSFDHSK…SPLLLQYSVK (106 aa)) is required for the interaction with the KDM2B-SKP1 heterodimeric complex. An RING-finger and WD40-associated ubiquitin-like domain (RAWUL); sufficient for interaction with BCOR and BCORL1 region spans residues 167–255 (EQLNLCLERL…SPLLLQYSVK (89 aa)).

As to quaternary structure, interacts with BCORL1, forming heterodimers. The PCGF1-BCORL1 heterodimeric complex interacts with the KDM2B-SKP1 heterodimeric complex to form a homotetrameric polycomb repression complex 1 (PRC1.1). Component of the repressive BCOR complex containing a Polycomb group subcomplex at least composed of RYBP, RING1 and RNF2/RING2. Specifically interacts with BCOR, RING1 and RNF2/RING2. Component of a PRC1-like complex. Interacts with CBX6, CBX7 and CBX8. Interacts with DPPA4, NANOG, POU5F1 and RYBP. In terms of tissue distribution, ubiquitous.

It is found in the nucleus. Functionally, component of the Polycomb group (PcG) multiprotein BCOR complex, a complex required to maintain the transcriptionally repressive state of some genes, such as BCL6 and the cyclin-dependent kinase inhibitor, CDKN1A. Transcriptional repressor that may be targeted to the DNA by BCL6; this transcription repressor activity may be related to PKC signaling pathway. Represses CDKN1A expression by binding to its promoter, and this repression is dependent on the retinoic acid response element (RARE element). Promotes cell cycle progression and enhances cell proliferation as well. May have a positive role in tumor cell growth by down-regulating CDKN1A. Component of a Polycomb group (PcG) multiprotein PRC1-like complex, a complex class required to maintain the transcriptionally repressive state of many genes, including Hox genes, throughout development. PcG PRC1 complex acts via chromatin remodeling and modification of histones; it mediates monoubiquitination of histone H2A 'Lys-119', rendering chromatin heritably changed in its expressibility. Within the PRC1-like complex, regulates RNF2 ubiquitin ligase activity. Regulates the expression of DPPA4 and NANOG in the NT2 embryonic carcinoma cells. The sequence is that of Polycomb group RING finger protein 1 (PCGF1) from Homo sapiens (Human).